The sequence spans 512 residues: Cytochrome P450 4d1 (512 aa).

Glu316 and Cys456 together coordinate heme.

It belongs to the cytochrome P450 family. The cofactor is heme.

It is found in the endoplasmic reticulum membrane. The protein localises to the microsome membrane. Involved in the metabolism of insect hormones and in the breakdown of synthetic insecticides. This Drosophila melanogaster (Fruit fly) protein is Cytochrome P450 4d1 (Cyp4d1).